The chain runs to 210 residues: GEM-like protein 7 (210 aa).

The region spanning 88–166 (KIYKRLFKVC…CKINGVNQSQ (79 aa)) is the GRAM domain.

The protein belongs to the GEM family.

In Arabidopsis thaliana (Mouse-ear cress), this protein is GEM-like protein 7.